The sequence spans 90 residues: Probable Fe(2+)-trafficking protein (90 aa).

It belongs to the Fe(2+)-trafficking protein family.

Could be a mediator in iron transactions between iron acquisition and iron-requiring processes, such as synthesis and/or repair of Fe-S clusters in biosynthetic enzymes. In Pseudomonas entomophila (strain L48), this protein is Probable Fe(2+)-trafficking protein.